The chain runs to 413 residues: Histidinol-phosphate aminotransferase, chloroplastic (413 aa).

A chloroplast-targeting transit peptide spans 1-35 (MGVIELCNTSSICIGRAKPSCCSIERNQRRRIICM). Residue Lys-273 is modified to N6-(pyridoxal phosphate)lysine.

It belongs to the class-II pyridoxal-phosphate-dependent aminotransferase family. Histidinol-phosphate aminotransferase subfamily. Homodimer. Requires pyridoxal 5'-phosphate as cofactor. As to expression, mainly expressed in green tissues.

It is found in the plastid. The protein localises to the chloroplast. It carries out the reaction L-histidinol phosphate + 2-oxoglutarate = 3-(imidazol-4-yl)-2-oxopropyl phosphate + L-glutamate. It participates in amino-acid biosynthesis; L-histidine biosynthesis; L-histidine from 5-phospho-alpha-D-ribose 1-diphosphate: step 7/9. The protein is Histidinol-phosphate aminotransferase, chloroplastic (HPA) of Nicotiana tabacum (Common tobacco).